We begin with the raw amino-acid sequence, 597 residues long: Probable potassium transport system protein Kup 1 (597 aa).

Helical transmembrane passes span 23 to 43 (GAWL…DSVL), 72 to 92 (LTMM…SRGT), 98 to 118 (VFGS…VVAI), 143 to 163 (ATGL…EALY), 174 to 194 (IYFT…GQGA), 226 to 246 (AVVL…TGAF), 273 to 293 (LYIP…LLLF), 303 to 323 (YGLA…IYLW), 329 to 349 (FGAV…FAAS), and 353 to 373 (FLHG…IMYT).

This sequence belongs to the HAK/KUP transporter (TC 2.A.72) family.

Its subcellular location is the cell membrane. It carries out the reaction K(+)(in) + H(+)(in) = K(+)(out) + H(+)(out). Transport of potassium into the cell. Likely operates as a K(+):H(+) symporter. This Bifidobacterium longum (strain NCC 2705) protein is Probable potassium transport system protein Kup 1 (kup1).